The following is a 345-amino-acid chain: Trace amine-associated receptor 6 (345 aa).

Over 1–32 (MSSNSSLLVAVQLCYANVNGSCVKIPFSPGSR) the chain is Extracellular. N4 and N19 each carry an N-linked (GlcNAc...) asparagine glycan. Cystine bridges form between C22–C186 and C105–C190. A helical membrane pass occupies residues 33 to 53 (VILYIVFGFGAVLAVFGNLLV). Residues 54–68 (MISILHFKQLHSPTN) are Cytoplasmic-facing. The helical transmembrane segment at 69 to 89 (FLVASLACADFLVGVTVMPFS) threads the bilayer. The Extracellular segment spans residues 90 to 107 (MVRTVESCWYFGRSFCTF). The chain crosses the membrane as a helical span at residues 108–128 (HTCCDVAFCYSSLFHLCFISI). At 129-147 (DRYIAVTDPLVYPTKFTVS) the chain is on the cytoplasmic side. Residues 148-168 (VSGICISVSWILPLMYSGAVF) form a helical membrane-spanning segment. Over 169 to 202 (YTGVYDDGLEELSDALNCIGGCQTVVNQNWVLTD) the chain is Extracellular. A helical transmembrane segment spans residues 203 to 223 (FLSFFIPTFIMIILYGNIFLV). The Cytoplasmic segment spans residues 224–259 (ARRQAKKIENTGSKTESSSESYKARVARRERKAAKT). Residues 260–276 (LGVTVVAFMISWLPYSI) form a helical membrane-spanning segment. The Extracellular segment spans residues 277 to 282 (DSLIDA). A helical transmembrane segment spans residues 283–302 (FMGFITPACIYEICCWCAYY). Topologically, residues 303-345 (NSAMNPLIYALFYPWFRKAIKVIVTGQVLKNSSATMNLFSEHI) are cytoplasmic.

Belongs to the G-protein coupled receptor 1 family. Expressed at low abundance in various brain tissues, as well as in fetal liver, but not in the cerebellum or placenta. In the brain, comparable levels of expression in basal ganglia, frontal cortex, substantia nigra, amygdala and hippocampus, highest expression in hippocampus and lowest expression in basal ganglia.

It is found in the cell membrane. In terms of biological role, olfactory receptor specific for trace amines, such as beta-phenylethylamine (beta-PEA). Trace amine compounds are enriched in animal body fluids and act on trace amine-associated receptors (TAARs) to elicit both intraspecific and interspecific innate behaviors. Beta-PEA-binding causes a conformation change that triggers signaling via G(s)-class of G alpha proteins (GNAL or GNAS). In Homo sapiens (Human), this protein is Trace amine-associated receptor 6.